The sequence spans 167 residues: Peptide deformylase (167 aa).

Fe cation contacts are provided by cysteine 91 and histidine 133. Residue glutamate 134 is part of the active site. Residue histidine 137 coordinates Fe cation.

This sequence belongs to the polypeptide deformylase family. It depends on Fe(2+) as a cofactor.

It catalyses the reaction N-terminal N-formyl-L-methionyl-[peptide] + H2O = N-terminal L-methionyl-[peptide] + formate. In terms of biological role, removes the formyl group from the N-terminal Met of newly synthesized proteins. Requires at least a dipeptide for an efficient rate of reaction. N-terminal L-methionine is a prerequisite for activity but the enzyme has broad specificity at other positions. The sequence is that of Peptide deformylase from Tolumonas auensis (strain DSM 9187 / NBRC 110442 / TA 4).